Reading from the N-terminus, the 346-residue chain is Tripartite motif-containing protein 44 (346 aa).

The tract at residues 68–167 is disordered; that stretch reads TPPASGGDDA…ETEAESEFDP (100 aa). Residues 89-167 are compositionally biased toward acidic residues; it reads EGEVESEVGE…ETEAESEFDP (79 aa). A B box-type zinc finger spans residues 176–217; that stretch reads VAKRKCPDHGLDLSTYCQEDRQLICVLCPVIGAHRGHQLSTL. Zn(2+)-binding residues include cysteine 181, histidine 184, cysteine 203, and histidine 209. Positions 292–327 form a coiled coil; it reads AHVTEILADIQSHMDRLMTQMAQAKEQLDTSNESAE. Positions 313-346 are disordered; the sequence is AQAKEQLDTSNESAEPKAEGDEEGPSGASEEEDT. Acidic residues predominate over residues 332–346; that stretch reads GDEEGPSGASEEEDT. 2 positions are modified to phosphoserine: serine 338 and serine 341.

Interacts (via coiled coil) with TRIM17 (via coiled coil). In terms of tissue distribution, expressed mainly in brain with high level in cerebral hemispheres and cerebellum. Lower expression in kidney, lung and spleen. In brain is detected in the hippocampus, thalamic and pretectal nuclei, substantia nigra, the dorsal part of the medulla, the cerebellum, in the olfactory nucleus, other cortical areas apart from hippocampus and the striatum. Indeed expression is confined in neuronal somata namely in the CA3 region and dentate gyrus of the hippocampus, caudate-putamen, parabranchial nucleus, olfactory nucleus, cortex, deep cerebellar nuclei and thalamus. Also highly expressed in the spleen. thymus and testis.

In terms of biological role, may play a role in the process of differentiation and maturation of neuronal cells. May regulate the activity of TRIM17. Is a negative regulator of PAX6 expression. The sequence is that of Tripartite motif-containing protein 44 (Trim44) from Mus musculus (Mouse).